Consider the following 337-residue polypeptide: MINNVSSLFPTVNRNITAVYKKSSFSVSPQKITLNPVKISSPFSPSSSSISATTLFRAPNAHSASFHRQSTAESSLHQQLPNVRQRLIQHLAEHGIKPARSMAEHIPPAPNWPAPPPPVQNEQSRPLPDVAQRLVQHLAEHGIQPARNMAEHIPPAPNWPAPPLPVQNEQSRPLPDVAQRLVQHLAEHGIQPARSMAEHIPPAPNWPAPPPPVQNEQSRPLPDVAQRLMQHLAEHGIQPARNMAEHIPPAPNWPAPTPPVQNEQSRPLPDVAQRLMQHLAEHGIQPARNMAEHIPPAPNWPAPTPPVQNEQSRPLPDVAQRLMQHLAEHGINTSKRS.

5 consecutive repeat copies span residues 96 to 142 (IKPA…AEHG), 143 to 189 (IQPA…AEHG), 190 to 236 (IQPA…AEHG), 237 to 283 (IQPA…AEHG), and 284 to 330 (IQPA…AEHG). Residues 96-330 (IKPARSMAEH…RLMQHLAEHG (235 aa)) are 5 X 48 AA approximate tandem repeats. Residues 291-312 (AEHIPPAPNWPAPTPPVQNEQS) form a disordered region. Residues 295–306 (PPAPNWPAPTPP) are compositionally biased toward pro residues.

The protein belongs to the EspF(U)/TccP family. As to quaternary structure, interacts with host BAIAP2 and host WASL/N-WASP. Can also interact with host proteins BAIAP2L1 and WAS/WASP.

The protein resides in the secreted. It localises to the host cytoplasm. Required for efficient pedestal formation in host epithelial cells during infection. Acts as an intermediate between Tir (via host BAIAP2) and host WASL/N-WASP. Directly binds and activates WASL/N-WASP, which stimulates actin polymerization and leads to the formation of actin pedestals at the sites of bacterial adhesion. This is Secreted effector protein EspF(U) (espF(U)) from Escherichia coli O157:H7.